A 161-amino-acid polypeptide reads, in one-letter code: ATP synthase subunit b 1 (161 aa).

Residues 5 to 25 (PETWVAIAFLLLMGVFAYVGV) form a helical membrane-spanning segment.

The protein belongs to the ATPase B chain family. In terms of assembly, F-type ATPases have 2 components, F(1) - the catalytic core - and F(0) - the membrane proton channel. F(1) has five subunits: alpha(3), beta(3), gamma(1), delta(1), epsilon(1). F(0) has three main subunits: a(1), b(2) and c(10-14). The alpha and beta chains form an alternating ring which encloses part of the gamma chain. F(1) is attached to F(0) by a central stalk formed by the gamma and epsilon chains, while a peripheral stalk is formed by the delta and b chains.

It localises to the cell inner membrane. F(1)F(0) ATP synthase produces ATP from ADP in the presence of a proton or sodium gradient. F-type ATPases consist of two structural domains, F(1) containing the extramembraneous catalytic core and F(0) containing the membrane proton channel, linked together by a central stalk and a peripheral stalk. During catalysis, ATP synthesis in the catalytic domain of F(1) is coupled via a rotary mechanism of the central stalk subunits to proton translocation. Functionally, component of the F(0) channel, it forms part of the peripheral stalk, linking F(1) to F(0). This Nitrobacter winogradskyi (strain ATCC 25391 / DSM 10237 / CIP 104748 / NCIMB 11846 / Nb-255) protein is ATP synthase subunit b 1.